A 410-amino-acid polypeptide reads, in one-letter code: Arginine deiminase (410 aa).

Cysteine 398 functions as the Amidino-cysteine intermediate in the catalytic mechanism.

The protein belongs to the arginine deiminase family.

The protein localises to the cytoplasm. It carries out the reaction L-arginine + H2O = L-citrulline + NH4(+). It functions in the pathway amino-acid degradation; L-arginine degradation via ADI pathway; carbamoyl phosphate from L-arginine: step 1/2. The sequence is that of Arginine deiminase from Limosilactobacillus reuteri (strain DSM 20016) (Lactobacillus reuteri).